A 344-amino-acid chain; its full sequence is Protein PopA1 (344 aa).

Disordered regions lie at residues 1–28 (MSVG…NSQQ), 58–108 (SAGG…DANN), 134–156 (QPGG…AGGQ), 211–242 (GNGV…EDQG), and 268–311 (GGGN…NLQS). Composition is skewed to low complexity over residues 8 to 28 (SPSN…NSQQ) and 65 to 83 (NTGN…ANDP). A compositionally biased stretch (polar residues) spans 89-108 (SKSQGPQSANKTGNVDDANN). Over residues 138-156 (NDKGNGVGGANGAKGAGGQ) the composition is skewed to gly residues. A compositionally biased stretch (low complexity) spans 215–235 (NGNQANGPQNAGDVNGANGAD). Positions 268 to 279 (GGGNQAQGGSKG) are enriched in gly residues. Residues 280 to 294 (AGNASPASGANPGAN) show a composition bias toward low complexity. Residues 295-311 (QPGSADDQSSGQNNLQS) show a composition bias toward polar residues.

PopA2 and PopA3 are produced from PopA1.

It is found in the secreted. Functionally, acts as a specific hypersensitive response (HR) elicitor. Has activity on tobacco (non-host plant) and petunia but is without activity on tomato (host plant); PopA3 seems to be more active than a PopA1-PopA2 mixture. In Ralstonia nicotianae (strain ATCC BAA-1114 / GMI1000) (Ralstonia solanacearum), this protein is Protein PopA1 (popA).